The sequence spans 195 residues: Dephospho-CoA kinase (195 aa).

Residues 3–195 (IIGLTGSIAM…LFVIKSLLKN (193 aa)) enclose the DPCK domain. ATP is bound at residue 11–16 (AMGKST).

Belongs to the CoaE family.

The protein resides in the cytoplasm. It catalyses the reaction 3'-dephospho-CoA + ATP = ADP + CoA + H(+). The protein operates within cofactor biosynthesis; coenzyme A biosynthesis; CoA from (R)-pantothenate: step 5/5. Its function is as follows. Catalyzes the phosphorylation of the 3'-hydroxyl group of dephosphocoenzyme A to form coenzyme A. The sequence is that of Dephospho-CoA kinase from Bartonella henselae (strain ATCC 49882 / DSM 28221 / CCUG 30454 / Houston 1) (Rochalimaea henselae).